We begin with the raw amino-acid sequence, 518 residues long: Pumilio homolog 14 (518 aa).

Disordered stretches follow at residues 26-46 and 77-114; these read TMAS…QPEN and VGQN…PPMG. The span at 29–44 shows a compositional bias: low complexity; sequence SSSSQPQPISSPFHQP. Positions 178 to 518 constitute a PUM-HD domain; that stretch reads YTNRFGYEGY…GNKVLEKLNI (341 aa). One copy of the Pumilio 1; degenerate repeat lies at 206-235; the sequence is SAFAKDKEMSERLGMSIFQGTKETVDAIYN. 7 Pumilio repeats span residues 236 to 271, 275 to 313, 314 to 348, 349 to 387, 388 to 423, 424 to 459, and 460 to 494; these read GLIG…QLVD, QQMF…RIVD, VVRT…LLLE, LIVQ…RLIM, EAIA…ALVR, QLIG…IVID, and LLRE…MLRY.

It is found in the cytoplasm. The protein localises to the nucleus. Sequence-specific RNA-binding protein that regulates translation and mRNA stability by binding the 3'-UTR of target mRNAs. This is Pumilio homolog 14 (APUM14) from Arabidopsis thaliana (Mouse-ear cress).